Here is a 117-residue protein sequence, read N- to C-terminus: Immunoglobulin heavy variable 7-4-1 (117 aa).

An N-terminal signal peptide occupies residues 1 to 19 (MDWTWRILFLVAAATGAHS). The segment at 20–44 (QVQLVQSGSELKKPGASVKVSCKAS) is framework-1. The Ig-like domain occupies 20–117 (QVQLVQSGSE…EDTAVYYCAR (98 aa)). A disulfide bond links cysteine 41 and cysteine 115. Residues 45–52 (GYTFTSYA) are complementarity-determining-1. Residues 53 to 69 (MNWVRQAPGQGLEWMGW) are framework-2. The segment at 70–77 (INTNTGNP) is complementarity-determining-2. The interval 78–115 (TYAQGFTGRFVFSLDTSVSTAYLQICSLKAEDTAVYYC) is framework-3. Residues 116 to 117 (AR) are complementarity-determining-3.

Immunoglobulins are composed of two identical heavy chains and two identical light chains; disulfide-linked.

The protein resides in the secreted. Its subcellular location is the cell membrane. V region of the variable domain of immunoglobulin heavy chains that participates in the antigen recognition. Immunoglobulins, also known as antibodies, are membrane-bound or secreted glycoproteins produced by B lymphocytes. In the recognition phase of humoral immunity, the membrane-bound immunoglobulins serve as receptors which, upon binding of a specific antigen, trigger the clonal expansion and differentiation of B lymphocytes into immunoglobulins-secreting plasma cells. Secreted immunoglobulins mediate the effector phase of humoral immunity, which results in the elimination of bound antigens. The antigen binding site is formed by the variable domain of one heavy chain, together with that of its associated light chain. Thus, each immunoglobulin has two antigen binding sites with remarkable affinity for a particular antigen. The variable domains are assembled by a process called V-(D)-J rearrangement and can then be subjected to somatic hypermutations which, after exposure to antigen and selection, allow affinity maturation for a particular antigen. This chain is Immunoglobulin heavy variable 7-4-1, found in Homo sapiens (Human).